Consider the following 144-residue polypeptide: Large ribosomal subunit protein uL15 (144 aa).

Positions 1 to 52 are disordered; the sequence is MRLNSLSPAEGAKHSAKRLGRGIGSGLGKTGGRGHKGQKSRTGGGVRRGFEG. A compositionally biased stretch (gly residues) spans 21–31; that stretch reads RGIGSGLGKTG.

It belongs to the universal ribosomal protein uL15 family. As to quaternary structure, part of the 50S ribosomal subunit.

In terms of biological role, binds to the 23S rRNA. This Actinobacillus pleuropneumoniae serotype 5b (strain L20) protein is Large ribosomal subunit protein uL15.